Consider the following 130-residue polypeptide: Small ribosomal subunit protein uS11 (130 aa).

The protein belongs to the universal ribosomal protein uS11 family. In terms of assembly, part of the 30S ribosomal subunit. Interacts with proteins S7 and S18. Binds to IF-3.

In terms of biological role, located on the platform of the 30S subunit, it bridges several disparate RNA helices of the 16S rRNA. Forms part of the Shine-Dalgarno cleft in the 70S ribosome. This Parasynechococcus marenigrum (strain WH8102) protein is Small ribosomal subunit protein uS11.